The sequence spans 829 residues: Leucine--tRNA ligase (829 aa).

Residues 42 to 52 carry the 'HIGH' region motif; it reads PYPSGRIHMGH. The 'KMSKS' region signature appears at 584–588; sequence KMSKS. K587 contributes to the ATP binding site.

It belongs to the class-I aminoacyl-tRNA synthetase family.

The protein resides in the cytoplasm. It catalyses the reaction tRNA(Leu) + L-leucine + ATP = L-leucyl-tRNA(Leu) + AMP + diphosphate. The sequence is that of Leucine--tRNA ligase from Syntrophobacter fumaroxidans (strain DSM 10017 / MPOB).